The primary structure comprises 311 residues: Methionyl-tRNA formyltransferase (311 aa).

Position 109–112 (109–112) interacts with (6S)-5,6,7,8-tetrahydrofolate; the sequence is SLLP.

The protein belongs to the Fmt family.

The enzyme catalyses L-methionyl-tRNA(fMet) + (6R)-10-formyltetrahydrofolate = N-formyl-L-methionyl-tRNA(fMet) + (6S)-5,6,7,8-tetrahydrofolate + H(+). Its function is as follows. Attaches a formyl group to the free amino group of methionyl-tRNA(fMet). The formyl group appears to play a dual role in the initiator identity of N-formylmethionyl-tRNA by promoting its recognition by IF2 and preventing the misappropriation of this tRNA by the elongation apparatus. This chain is Methionyl-tRNA formyltransferase, found in Staphylococcus aureus (strain MW2).